The chain runs to 445 residues: 3-dehydroquinate synthase, chloroplastic (445 aa).

A chloroplast-targeting transit peptide spans 1–68 (MAAFSLSAKQ…RASASSTAPV (68 aa)). NAD(+) is bound by residues Asn-122, 153 to 155 (DGE), Lys-158, 186 to 191 (GGVIGD), 211 to 212 (TT), Lys-224, Lys-233, and 251 to 254 (TLNT). Residue Glu-266 participates in a divalent metal cation binding. Lys-308 lines the NAD(+) pocket. 2 residues coordinate a divalent metal cation: His-329 and His-346.

Belongs to the sugar phosphate cyclases superfamily. Dehydroquinate synthase family. As to quaternary structure, homodimer. It depends on a divalent metal cation as a cofactor. NAD(+) serves as cofactor.

The protein resides in the plastid. It localises to the chloroplast. It catalyses the reaction 7-phospho-2-dehydro-3-deoxy-D-arabino-heptonate = 3-dehydroquinate + phosphate. It functions in the pathway metabolic intermediate biosynthesis; chorismate biosynthesis; chorismate from D-erythrose 4-phosphate and phosphoenolpyruvate: step 2/7. Its function is as follows. Catalyzes the second step in the shikimate pathway. The sequence is that of 3-dehydroquinate synthase, chloroplastic (DHQS) from Actinidia chinensis var. chinensis (Chinese soft-hair kiwi).